Consider the following 2480-residue polypeptide: Polyprotein P1234 (2480 aa).

An Alphavirus-like MT domain is found at 27 to 257 (ESQQVTPNDH…ESRRLLKSWH (231 aa)). Residues 242–261 (GXTLYIESRRLLKSWHLPSV) form a nsP1 membrane-binding region. S-palmitoyl cysteine; by host attachment occurs at residues Cys415 and Cys417. A disordered region spans residues 480-506 (YSGDRNEAREAEKEAEETKEAELTREA). Positions 483-504 (DRNEAREAEKEAEETKEAELTR) are enriched in basic and acidic residues. The (+)RNA virus helicase ATP-binding domain occupies 688–840 (DLINPPFHEF…HDICTQVLHK (153 aa)). Position 719-726 (719-726 (GVPGSGKS)) interacts with a ribonucleoside 5'-triphosphate. A (+)RNA virus helicase C-terminal domain is found at 841–989 (SISRRCTLPI…LEEWQEEHDN (149 aa)). One can recognise a Peptidase C9 domain in the interval 1002–1324 (DPFQNKAKVC…QRLSSMFACN (323 aa)). The tract at residues 1003-1022 (PFQNKAKVCWAKCLVQVLET) is nucleolus localization signal. The active-site For cysteine protease nsP2 activity is Cys1011. The short motif at 1055–1064 (TKYYGVDLDS) is the Nuclear export signal element. His1080 serves as the catalytic For cysteine protease nsP2 activity. The Nuclear localization signal signature appears at 1179–1183 (PHKRV). Residues 1332 to 1491 (APSYRVRRTD…KIQEAIDRRT (160 aa)) form the Macro domain. Residues Asp1341, Asn1355, Gly1363, Gly1443, Val1444, and Phe1445 each coordinate ADP-D-ribose. The Zn(2+) site is built by Cys1593, Cys1595, Cys1618, and Cys1636. Thr1675 is subject to Phosphothreonine; by host. 2 consecutive short sequence motifs (FGDF; binding to host G3BP1) follow at residues 1843 to 1846 (FGDF) and 1854 to 1857 (FGDI). Residues 2234 to 2349 (DAVLETDIAS…HGVRSDPLMA (116 aa)) form the RdRp catalytic domain.

As to quaternary structure, interacts with non-structural protein 3. Interacts with RNA-directed RNA polymerase nsP4. Interacts with protease nsP2. interacts with itself. Interacts with mRNA-capping enzyme nsP1. Interacts with host DDX1. Interacts with host DDX3. Interacts (via C-terminus) with host G3BP1; this interaction inhibits the formation of host stress granules on viral mRNAs and the nsp3-G3BP1 complexes bind viral RNAs and probably orchestrate the assembly of viral replication complexes. Interacts (via C-terminus) with host G3BP2; this interaction inhibits the formation of host stress granules on viral mRNAs and the nsp3-G3BP2 complexes bind viral RNAs and probably orchestrate the assembly of viral replication complexes. In terms of assembly, interacts with mRNA-capping enzyme nsP1. Interacts with protease nsP2. interacts with itself. As to quaternary structure, interacts with RNA-directed RNA polymerase nsP4. Interacts with mRNA-capping enzyme nsP1. Interacts with KPNA1/karyopherin-alpha1; this interaction probably allows the active transport of protease nsP2 into the host nucleus. The cofactor is Mg(2+). Requires Mn(2+) as cofactor. Specific enzymatic cleavages in vivo yield mature proteins. The processing of the polyprotein is temporally regulated. In early stages (1.7 hpi), P1234 is first cleaved in trans through its nsP2 protease activity, releasing P123' and nsP4, which associate to form the early replication complex. At the same time, P1234 is also cut at the nsP1/nsP2 site early in infection but with lower efficiency. After replication of the viral minus-strand RNAs (4 hpi), the polyproteins are cut at the nsP1/nsP2 and nsP2/nsP3 sites very efficiently, preventing accumulation of P123' and P1234 and allowing the formation of the late replication complex. NsP3'/nsP4 site is not cleaved anymore and P34 is produced rather than nsP4. Post-translationally, specific enzymatic cleavages in vivo yield mature proteins. The processing of the polyprotein is temporally regulated. In early stages (1.7 hpi), P123 is cleaved at the nsP1/nsP2 site with low efficiency. After replication of the viral minus-strand RNAs (4 hpi), the polyproteins are cut at the nsP1/nsP2 and nsP2/nsP3 sites very efficiently, preventing accumulation of P123 and allowing the formation of the late replication complex. In terms of processing, specific enzymatic cleavages in vivo yield mature proteins. The processing of the polyprotein is temporally regulated. In early stages (1.7 hpi), P123' is cleaved at the nsP1/nsP2 site with low efficiency. After replication of the viral minus-strand RNAs (4 hpi), the polyproteins are cut at the nsP1/nsP2 and nsP2/nsP3 sites very efficiently, preventing accumulation of P123' and allowing the formation of the late replication complex. Palmitoylated by host palmitoyltransferases ZDHHC2 and ZDHHC19. Post-translationally, phosphorylated by host on serines and threonines. In terms of processing, ubiquitinated; targets the protein for rapid degradation via the ubiquitin system. Nsp4 is present in extremely low quantities due to low frequency of translation through the amber stop-codon and the degradation by the ubiquitin pathway.

The protein localises to the host cytoplasmic vesicle membrane. It is found in the host cell membrane. It localises to the host cell projection. The protein resides in the host filopodium. Its subcellular location is the host nucleus. The protein localises to the host cytoplasm. It carries out the reaction GTP + S-adenosyl-L-methionine = N(7)-methyl-GTP + S-adenosyl-L-homocysteine. It catalyses the reaction N(7)-methyl-GTP + L-histidyl-[protein] = N(tele)-(N(7)-methylguanosine 5'-phospho)-L-histidyl-[protein] + diphosphate. The enzyme catalyses N(tele)-(N(7)-methylguanosine 5'-phospho)-L-histidyl-[protein] + a 5'-end diphospho-(purine-ribonucleoside) in mRNA + H(+) = a 5'-end (N(7)-methyl 5'-triphosphoguanosine)-(purine-ribonucleoside) in mRNA + L-histidyl-[protein]. The catalysed reaction is a 5'-end triphospho-ribonucleoside in mRNA + H2O = a 5'-end diphospho-ribonucleoside in mRNA + phosphate + H(+). It carries out the reaction a ribonucleoside 5'-triphosphate + H2O = a ribonucleoside 5'-diphosphate + phosphate + H(+). It catalyses the reaction ATP + H2O = ADP + phosphate + H(+). The enzyme catalyses RNA(n) + a ribonucleoside 5'-triphosphate = RNA(n+1) + diphosphate. The catalysed reaction is 4-O-(ADP-D-ribosyl)-L-aspartyl-[protein] + H2O = L-aspartyl-[protein] + ADP-D-ribose + H(+). It carries out the reaction 5-O-(ADP-D-ribosyl)-L-glutamyl-[protein] + H2O = L-glutamyl-[protein] + ADP-D-ribose + H(+). It catalyses the reaction RNA(n) + ATP = RNA(n)-3'-adenine ribonucleotide + diphosphate. The enzyme catalyses ADP-alpha-D-ribose 1''-phosphate + H2O = ADP-D-ribose + phosphate. Inactive precursor of the viral replicase, which is activated by cleavages carried out by the viral protease nsP2. Its function is as follows. The early replication complex formed by the polyprotein P123 and nsP4 synthesizes minus-strand RNAs. As soon P123 is cleaved into mature proteins, the plus-strand RNAs synthesis begins. In terms of biological role, the early replication complex formed by the polyprotein P123' and nsP4 synthesizes minus-strand RNAs. Polyprotein P123' is a short-lived polyprotein that accumulates during early stage of infection. As soon P123' is cleaved into mature proteins, the plus-strand RNAs synthesis begins. Functionally, cytoplasmic capping enzyme that catalyzes two virus-specific reactions: methyltransferase and nsP1 guanylyltransferase. mRNA-capping is necessary since all viral RNAs are synthesized in the cytoplasm, and host capping enzymes are restricted to the nucleus. The enzymatic reaction involves a covalent link between 7-methyl-GMP and nsP1, whereas eukaryotic capping enzymes form a covalent complex only with GMP. nsP1 capping consists in the following reactions: GTP is first methylated into 7-methyl-GMP and then is covalently linked to nsP1 to form the m7GMp-nsP1 complex from which 7-methyl-GMP complex is transferred to the mRNA to create the cap structure. NsP1 is also needed for the initiation of the minus-strand RNAs synthesis. Probably serves as a membrane anchor for the replication complex composed of nsP1-nsP4. Palmitoylated nsP1 is remodeling host cell cytoskeleton, and induces filopodium-like structure formation at the surface of the host cell. Multifunctional protein whose N-terminus is part of the RNA polymerase complex and displays NTPase, RNA triphosphatase and helicase activities. NTPase and RNA triphosphatase are involved in viral RNA capping and helicase keeps a check on the dsRNA replication intermediates. The C-terminus harbors a protease that specifically cleaves the polyproteins and releases the mature proteins. Required for the shutoff of minus-strand RNAs synthesis. Specifically inhibits the host IFN response by promoting the nuclear export of host STAT1. Also inhibits host transcription by inducing the rapid proteasome-dependent degradation of POLR2A, a catalytic subunit of the RNAPII complex. The resulting inhibition of cellular protein synthesis serves to ensure maximal viral gene expression and to evade host immune response. Its function is as follows. Seems to be essential for minus-strand RNAs and subgenomic 26S mRNAs synthesis. Displays mono-ADP-ribosylhydrolase activity. ADP-ribosylation is a post-translational modification that controls various processes of the host cell and the virus probably needs to revert it for optimal viral replication. Binds proteins of FXR family and sequesters them into the viral RNA replication complexes thereby inhibiting the formation of host stress granules on viral mRNAs. The nsp3'-FXR complexes bind viral RNAs and probably orchestrate the assembly of viral replication complexes, thanks to the ability of FXR family members to self-assemble and bind DNA. In terms of biological role, seems to be essential for minus-strand RNAs and subgenomic 26S mRNAs synthesis. Displays mono-ADP-ribosylhydrolase activity. ADP-ribosylation is a post-translational modification that controls various processes of the host cell and the virus probably needs to revert it for optimal viral replication. Binds proteins of G3BP family and sequesters them into the viral RNA replication complexes thereby inhibiting the formation of host stress granules on viral mRNAs. The nsp3-G3BP complexes bind viral RNAs and probably orchestrate the assembly of viral replication complexes, thanks to the ability of G3BP family members to self-assemble and bind DNA. Functionally, RNA dependent RNA polymerase. Replicates genomic and antigenomic RNA by recognizing replications specific signals. The early replication complex formed by the polyprotein P123 and nsP4 synthesizes minus-strand RNAs. The late replication complex composed of fully processed nsP1-nsP4 is responsible for the production of genomic and subgenomic plus-strand RNAs. This chain is Polyprotein P1234, found in Aedes (Common banded mosquito).